We begin with the raw amino-acid sequence, 374 residues long: Tryptophan--tRNA ligase (374 aa).

The short motif at 81 to 89 (PSGPVHIGH) is the 'HIGH' region element. A 'KMSKS' region motif is present at residues 258 to 262 (KMSAS).

The protein belongs to the class-I aminoacyl-tRNA synthetase family.

Its subcellular location is the cytoplasm. It carries out the reaction tRNA(Trp) + L-tryptophan + ATP = L-tryptophyl-tRNA(Trp) + AMP + diphosphate + H(+). The protein is Tryptophan--tRNA ligase of Pyrobaculum calidifontis (strain DSM 21063 / JCM 11548 / VA1).